The primary structure comprises 304 residues: uncharacterized protein (304 aa).

ATP is bound at residue 72–79; it reads GPTGSGKT.

This sequence belongs to the CbbQ/NirQ/NorQ/GpvN family.

This is an uncharacterized protein from Bacillus subtilis (strain 168).